The chain runs to 80 residues: Exodeoxyribonuclease 7 small subunit (80 aa).

The protein belongs to the XseB family. In terms of assembly, heterooligomer composed of large and small subunits.

Its subcellular location is the cytoplasm. The enzyme catalyses Exonucleolytic cleavage in either 5'- to 3'- or 3'- to 5'-direction to yield nucleoside 5'-phosphates.. Bidirectionally degrades single-stranded DNA into large acid-insoluble oligonucleotides, which are then degraded further into small acid-soluble oligonucleotides. In Vibrio cholerae serotype O1 (strain ATCC 39541 / Classical Ogawa 395 / O395), this protein is Exodeoxyribonuclease 7 small subunit.